The following is a 496-amino-acid chain: NAD(P)H-quinone oxidoreductase subunit 2, chloroplastic (496 aa).

The next 14 helical transmembrane spans lie at Ser-14–Val-34, Met-42–Trp-62, Phe-79–Phe-99, Leu-109–Ala-129, Ile-133–Val-153, Leu-167–Leu-187, Leu-210–Val-230, Pro-244–Ile-264, Ile-281–Thr-301, Arg-305–Gly-325, Leu-334–Phe-354, Ala-377–Phe-397, Ile-400–Phe-420, and Ile-469–Phe-489.

The protein belongs to the complex I subunit 2 family. As to quaternary structure, NDH is composed of at least 16 different subunits, 5 of which are encoded in the nucleus.

It is found in the plastid. Its subcellular location is the chloroplast thylakoid membrane. It catalyses the reaction a plastoquinone + NADH + (n+1) H(+)(in) = a plastoquinol + NAD(+) + n H(+)(out). It carries out the reaction a plastoquinone + NADPH + (n+1) H(+)(in) = a plastoquinol + NADP(+) + n H(+)(out). Its function is as follows. NDH shuttles electrons from NAD(P)H:plastoquinone, via FMN and iron-sulfur (Fe-S) centers, to quinones in the photosynthetic chain and possibly in a chloroplast respiratory chain. The immediate electron acceptor for the enzyme in this species is believed to be plastoquinone. Couples the redox reaction to proton translocation, and thus conserves the redox energy in a proton gradient. The protein is NAD(P)H-quinone oxidoreductase subunit 2, chloroplastic of Chara vulgaris (Common stonewort).